We begin with the raw amino-acid sequence, 166 residues long: MAIKLEDKKAIVAEVNEAAKAALSAVVADARGVTVGAMTGLRKEAREAGVYVRVVRNTLARRAVAGTQFEILNDAFKGPTLIAFSNEHPGAAARIFKEFAKGQDKFEIKAAAFEGQFLAANQIDVLATLPTYNEAVAQLMSVIQGATSKLARTLAAIRDQKEGAAA.

This sequence belongs to the universal ribosomal protein uL10 family. Part of the ribosomal stalk of the 50S ribosomal subunit. The N-terminus interacts with L11 and the large rRNA to form the base of the stalk. The C-terminus forms an elongated spine to which L12 dimers bind in a sequential fashion forming a multimeric L10(L12)X complex.

Its function is as follows. Forms part of the ribosomal stalk, playing a central role in the interaction of the ribosome with GTP-bound translation factors. The protein is Large ribosomal subunit protein uL10 of Azotobacter vinelandii (strain DJ / ATCC BAA-1303).